We begin with the raw amino-acid sequence, 247 residues long: 5'-nucleotidase SurE (247 aa).

A divalent metal cation is bound by residues D8, D9, S39, and N91.

The protein belongs to the SurE nucleotidase family. The cofactor is a divalent metal cation.

Its subcellular location is the cytoplasm. The catalysed reaction is a ribonucleoside 5'-phosphate + H2O = a ribonucleoside + phosphate. Its function is as follows. Nucleotidase that shows phosphatase activity on nucleoside 5'-monophosphates. This chain is 5'-nucleotidase SurE, found in Methylobacillus flagellatus (strain ATCC 51484 / DSM 6875 / VKM B-1610 / KT).